Reading from the N-terminus, the 419-residue chain is MAPK/MAK/MRK overlapping kinase (419 aa).

The 282-residue stretch at Tyr-4–Phe-285 folds into the Protein kinase domain. ATP-binding positions include Ile-10 to Val-18 and Lys-33. Asp-128 functions as the Proton acceptor in the catalytic mechanism. Disordered stretches follow at residues Phe-285–Ala-344 and Pro-390–Arg-419. Basic and acidic residues-rich tracts occupy residues Lys-322–Pro-338 and Lys-393–Lys-402.

Belongs to the protein kinase superfamily. CMGC Ser/Thr protein kinase family. CDC2/CDKX subfamily. Mg(2+) is required as a cofactor. Autophosphorylated. Expressed in heart, brain, lung, kidney, and pancreas, and at very low levels in placenta, liver and skeletal muscle. Detected in retina.

The protein resides in the cytoplasm. It localises to the cell projection. The protein localises to the cilium. Its subcellular location is the nucleus. It catalyses the reaction L-seryl-[protein] + ATP = O-phospho-L-seryl-[protein] + ADP + H(+). The enzyme catalyses L-threonyl-[protein] + ATP = O-phospho-L-threonyl-[protein] + ADP + H(+). With respect to regulation, phosphorylation appears to increase the enzymatic activity. In terms of biological role, able to phosphorylate several exogenous substrates and to undergo autophosphorylation. Negatively regulates cilium length in a cAMP and mTORC1 signaling-dependent manner. The polypeptide is MAPK/MAK/MRK overlapping kinase (MOK) (Homo sapiens (Human)).